The sequence spans 62 residues: Photosystem II reaction center protein Z (62 aa).

2 consecutive transmembrane segments (helical) span residues 8-28 (AVFA…VVFA) and 41-61 (FSGT…NSLI).

The protein belongs to the PsbZ family. PSII is composed of 1 copy each of membrane proteins PsbA, PsbB, PsbC, PsbD, PsbE, PsbF, PsbH, PsbI, PsbJ, PsbK, PsbL, PsbM, PsbT, PsbY, PsbZ, Psb30/Ycf12, at least 3 peripheral proteins of the oxygen-evolving complex and a large number of cofactors. It forms dimeric complexes.

The protein localises to the plastid. It is found in the chloroplast thylakoid membrane. Its function is as follows. May control the interaction of photosystem II (PSII) cores with the light-harvesting antenna, regulates electron flow through the 2 photosystem reaction centers. PSII is a light-driven water plastoquinone oxidoreductase, using light energy to abstract electrons from H(2)O, generating a proton gradient subsequently used for ATP formation. The chain is Photosystem II reaction center protein Z from Nicotiana sylvestris (Wood tobacco).